Here is a 135-residue protein sequence, read N- to C-terminus: Phosphoribosyl-AMP cyclohydrolase (135 aa).

Asp-89 provides a ligand contact to Mg(2+). Residue Cys-90 participates in Zn(2+) binding. Mg(2+) contacts are provided by Asp-91 and Asp-93. The Zn(2+) site is built by Cys-106 and Cys-113.

The protein belongs to the PRA-CH family. In terms of assembly, homodimer. Mg(2+) is required as a cofactor. It depends on Zn(2+) as a cofactor.

Its subcellular location is the cytoplasm. The catalysed reaction is 1-(5-phospho-beta-D-ribosyl)-5'-AMP + H2O = 1-(5-phospho-beta-D-ribosyl)-5-[(5-phospho-beta-D-ribosylamino)methylideneamino]imidazole-4-carboxamide. Its pathway is amino-acid biosynthesis; L-histidine biosynthesis; L-histidine from 5-phospho-alpha-D-ribose 1-diphosphate: step 3/9. In terms of biological role, catalyzes the hydrolysis of the adenine ring of phosphoribosyl-AMP. This is Phosphoribosyl-AMP cyclohydrolase from Bifidobacterium adolescentis (strain ATCC 15703 / DSM 20083 / NCTC 11814 / E194a).